The sequence spans 344 residues: Melanocyte-stimulating hormone receptor (344 aa).

Topologically, residues 1–37 (MPMQGAQRKLLGSLNSTPTATSNLGLAANHTGAPCLE) are extracellular. A glycan (N-linked (GlcNAc...) asparagine) is linked at Asn29. Residues 38–63 (VPIPDGLFLSLGLVSLVENVLVVAAI) traverse the membrane as a helical segment. Over 64-72 (AKNRNLHSS) the chain is Cytoplasmic. A helical membrane pass occupies residues 73-93 (MYCFICCLAVSDLLVSGSNML). Topologically, residues 94–118 (ETAIILLLEAGALVTRASVVQQLHN) are extracellular. The helical transmembrane segment at 119–140 (TIDVLTCSSMLCSLCFLGAIAV) threads the bilayer. The Cytoplasmic portion of the chain corresponds to 141–163 (DRYISIFYALRYHSIMTLPRAQR). A helical transmembrane segment spans residues 164 to 183 (AIAAIWVASVLSSTLFITYY). The Extracellular segment spans residues 184 to 191 (DHAAVLLC). A helical transmembrane segment spans residues 192 to 211 (LVVFFLAMLVLMAVLYVHML). The Cytoplasmic portion of the chain corresponds to 212–240 (ARACQHAQGIIRLHKRQPPAHKGFGLRGA). The helical transmembrane segment at 241-266 (ATLTILLGIFFLCWGPFFLHLTLVVF) threads the bilayer. Residues 267–279 (CPQHMTCSCIFKN) lie on the Extracellular side of the membrane. A helical membrane pass occupies residues 280–300 (FKVFLTLIICNTIIDPLIYAF). The Cytoplasmic segment spans residues 301–344 (RSQELRRTLKEVLLCSRWPGCWAEGGGDSVWPGSCVTLRGPLPP). Cys315 carries S-palmitoyl cysteine lipidation.

It belongs to the G-protein coupled receptor 1 family. In terms of assembly, interacts with MGRN1, but does not undergo MGRN1-mediated ubiquitination; this interaction competes with GNAS-binding and thus inhibits agonist-induced cAMP production. Interacts with OPN3; the interaction results in a decrease in MC1R-mediated cAMP signaling and ultimately a decrease in melanin production in melanocytes.

Its subcellular location is the cell membrane. Functionally, receptor for MSH (alpha, beta and gamma) and ACTH. The activity of this receptor is mediated by G proteins which activate adenylate cyclase. Mediates melanogenesis, the production of eumelanin (black/brown) and phaeomelanin (red/yellow), via regulation of cAMP signaling in melanocytes. In Callimico goeldii (Goeldi's marmoset), this protein is Melanocyte-stimulating hormone receptor (MC1R).